Here is a 315-residue protein sequence, read N- to C-terminus: DNA-directed RNA polymerase subunit alpha (315 aa).

Residues 1–228 (MIEIEKPKIE…EHLNLFIDLS (228 aa)) are alpha N-terminal domain (alpha-NTD). The interval 245–315 (KEKVLEMTIE…LGLSLAPSED (71 aa)) is alpha C-terminal domain (alpha-CTD).

Belongs to the RNA polymerase alpha chain family. As to quaternary structure, homodimer. The RNAP catalytic core consists of 2 alpha, 1 beta, 1 beta' and 1 omega subunit. When a sigma factor is associated with the core the holoenzyme is formed, which can initiate transcription.

It carries out the reaction RNA(n) + a ribonucleoside 5'-triphosphate = RNA(n+1) + diphosphate. DNA-dependent RNA polymerase catalyzes the transcription of DNA into RNA using the four ribonucleoside triphosphates as substrates. In Acetivibrio thermocellus (strain ATCC 27405 / DSM 1237 / JCM 9322 / NBRC 103400 / NCIMB 10682 / NRRL B-4536 / VPI 7372) (Clostridium thermocellum), this protein is DNA-directed RNA polymerase subunit alpha.